The following is an 86-amino-acid chain: Large ribosomal subunit protein bL27 (86 aa).

It belongs to the bacterial ribosomal protein bL27 family.

This chain is Large ribosomal subunit protein bL27, found in Flavobacterium psychrophilum (strain ATCC 49511 / DSM 21280 / CIP 103535 / JIP02/86).